The following is a 540-amino-acid chain: Chaperonin GroEL (540 aa).

Residues 30-33, K51, 87-91, G415, and D495 contribute to the ATP site; these read TLGP and DGTTT.

It belongs to the chaperonin (HSP60) family. Forms a cylinder of 14 subunits composed of two heptameric rings stacked back-to-back. Interacts with the co-chaperonin GroES.

The protein resides in the cytoplasm. The enzyme catalyses ATP + H2O + a folded polypeptide = ADP + phosphate + an unfolded polypeptide.. Its function is as follows. Together with its co-chaperonin GroES, plays an essential role in assisting protein folding. The GroEL-GroES system forms a nano-cage that allows encapsulation of the non-native substrate proteins and provides a physical environment optimized to promote and accelerate protein folding. The sequence is that of Chaperonin GroEL from Serratia ficaria.